Consider the following 358-residue polypeptide: Leukotriene B4 receptor 2 (358 aa).

The Extracellular segment spans residues 1 to 24 (MSVCYRPPGNETLLSWKGSRATGT). A glycan (N-linked (GlcNAc...) asparagine) is linked at asparagine 10. The chain crosses the membrane as a helical span at residues 25 to 45 (AFLLLAALLGLPGNGFVVWSL). At 46–60 (AGWRPTAGRPLAATL) the chain is on the cytoplasmic side. A helical membrane pass occupies residues 61-81 (VLHLALADGAVLLLTPLFVAF). Over 82–96 (LSRQAWPLGQVGCKA) the chain is Extracellular. A helical transmembrane segment spans residues 97–117 (VYYVCALSMYASVLLTGLLSL). Residues 118–140 (QRCLAVTRPFLAPRLRSPALARR) lie on the Cytoplasmic side of the membrane. Residues 141–161 (LLLGVWLAALVLAVPAAVYRH) form a helical membrane-spanning segment. Residues 162–185 (LWGDRVCQLCHPSAVHAAAHLSLE) lie on the Extracellular side of the membrane. Residues 186–206 (TLTAFVLPFGTVLGCYGVTLA) traverse the membrane as a helical segment. The Cytoplasmic segment spans residues 207–225 (RLRGARWGSGRQGTRVGRL). Residues 226 to 246 (VSAIVLAFGLLWAPYHAVNLL) form a helical membrane-spanning segment. Over 247-275 (QAVAALAPPEGPLARLGGAGQAARAGTTA) the chain is Extracellular. The chain crosses the membrane as a helical span at residues 276 to 296 (LAFFSSSVNPVLYVFTAGDLL). Residues 297–358 (PRAGPRFLTR…GRMEKDSQEW (62 aa)) lie on the Cytoplasmic side of the membrane. The disordered stretch occupies residues 315–358 (RVGSRSREGTMELRTTPRLKVVGQGRGYGDPGGGGRMEKDSQEW). Residues 338 to 349 (QGRGYGDPGGGG) show a composition bias toward gly residues.

The protein belongs to the G-protein coupled receptor 1 family.

The protein localises to the cell membrane. Low-affinity receptor for leukotrienes including leukotriene B4. Mediates chemotaxis of granulocytes and macrophages. The response is mediated via G-proteins that activate a phosphatidylinositol-calcium second messenger system. This is Leukotriene B4 receptor 2 (Ltb4r2) from Rattus norvegicus (Rat).